The chain runs to 143 residues: Large ribosomal subunit protein uL11 (143 aa).

The protein belongs to the universal ribosomal protein uL11 family. In terms of assembly, part of the ribosomal stalk of the 50S ribosomal subunit. Interacts with L10 and the large rRNA to form the base of the stalk. L10 forms an elongated spine to which L12 dimers bind in a sequential fashion forming a multimeric L10(L12)X complex. In terms of processing, one or more lysine residues are methylated.

In terms of biological role, forms part of the ribosomal stalk which helps the ribosome interact with GTP-bound translation factors. In Clavibacter sepedonicus (Clavibacter michiganensis subsp. sepedonicus), this protein is Large ribosomal subunit protein uL11.